The following is a 462-amino-acid chain: F-box/LRR-repeat protein At5g38396 (462 aa).

One can recognise an F-box domain in the interval 1–47 (MDLLRNIPDELICHILSFLTTKEAALTSVLSKRWRNLLAFVSNLHID). 5 LRR repeats span residues 118–146 (SIDL…KLHR), 148–175 (CIGQ…ELDY), 197–222 (VDAF…TMSS), 302–333 (CLDL…SIKS), and 334–359 (AENR…VLEG).

This is F-box/LRR-repeat protein At5g38396 from Arabidopsis thaliana (Mouse-ear cress).